The sequence spans 407 residues: Proteasome-activating nucleotidase (407 aa).

The stretch at 22 to 67 forms a coiled coil; it reads KEKAYLAELESKVLRLELKNKDITRENVQIKKENEILKRELDKLRI. Residues 192-197 and His331 contribute to the ATP site; that span reads GTGKTL. The docks into pockets in the proteasome alpha-ring to cause gate opening stretch occupies residues 405–407; that stretch reads MYG.

This sequence belongs to the AAA ATPase family. In terms of assembly, homohexamer. The hexameric complex has a two-ring architecture resembling a top hat that caps the 20S proteasome core at one or both ends. Upon ATP-binding, the C-terminus of PAN interacts with the alpha-rings of the proteasome core by binding to the intersubunit pockets.

It localises to the cytoplasm. ATPase which is responsible for recognizing, binding, unfolding and translocation of substrate proteins into the archaeal 20S proteasome core particle. Is essential for opening the gate of the 20S proteasome via an interaction with its C-terminus, thereby allowing substrate entry and access to the site of proteolysis. Thus, the C-termini of the proteasomal ATPase function like a 'key in a lock' to induce gate opening and therefore regulate proteolysis. Unfolding activity requires energy from ATP hydrolysis, whereas ATP binding alone promotes ATPase-20S proteasome association which triggers gate opening, and supports translocation of unfolded substrates. The sequence is that of Proteasome-activating nucleotidase from Methanococcus vannielii (strain ATCC 35089 / DSM 1224 / JCM 13029 / OCM 148 / SB).